A 395-amino-acid polypeptide reads, in one-letter code: Chorismate synthase (395 aa).

Residues R40 and R46 each contribute to the NADP(+) site. FMN contacts are provided by residues 137-139 (RSS), G308, 323-327 (KPLPT), and R349.

Belongs to the chorismate synthase family. As to quaternary structure, homotetramer. The cofactor is FMNH2.

It catalyses the reaction 5-O-(1-carboxyvinyl)-3-phosphoshikimate = chorismate + phosphate. Its pathway is metabolic intermediate biosynthesis; chorismate biosynthesis; chorismate from D-erythrose 4-phosphate and phosphoenolpyruvate: step 7/7. Functionally, catalyzes the anti-1,4-elimination of the C-3 phosphate and the C-6 proR hydrogen from 5-enolpyruvylshikimate-3-phosphate (EPSP) to yield chorismate, which is the branch point compound that serves as the starting substrate for the three terminal pathways of aromatic amino acid biosynthesis. This reaction introduces a second double bond into the aromatic ring system. This is Chorismate synthase from Gloeobacter violaceus (strain ATCC 29082 / PCC 7421).